Reading from the N-terminus, the 196-residue chain is Imidazoleglycerol-phosphate dehydratase (196 aa).

The protein belongs to the imidazoleglycerol-phosphate dehydratase family.

The protein localises to the cytoplasm. The catalysed reaction is D-erythro-1-(imidazol-4-yl)glycerol 3-phosphate = 3-(imidazol-4-yl)-2-oxopropyl phosphate + H2O. It functions in the pathway amino-acid biosynthesis; L-histidine biosynthesis; L-histidine from 5-phospho-alpha-D-ribose 1-diphosphate: step 6/9. This is Imidazoleglycerol-phosphate dehydratase from Akkermansia muciniphila (strain ATCC BAA-835 / DSM 22959 / JCM 33894 / BCRC 81048 / CCUG 64013 / CIP 107961 / Muc).